A 313-amino-acid polypeptide reads, in one-letter code: tRNA-cytidine(32) 2-sulfurtransferase (313 aa).

Positions Ser-47–Ser-52 match the PP-loop motif motif. [4Fe-4S] cluster-binding residues include Cys-122, Cys-125, and Cys-213. A disordered region spans residues Pro-288–Lys-313. Residues Thr-299–Lys-313 show a composition bias toward basic and acidic residues.

This sequence belongs to the TtcA family. Homodimer. Mg(2+) serves as cofactor. Requires [4Fe-4S] cluster as cofactor.

The protein resides in the cytoplasm. It catalyses the reaction cytidine(32) in tRNA + S-sulfanyl-L-cysteinyl-[cysteine desulfurase] + AH2 + ATP = 2-thiocytidine(32) in tRNA + L-cysteinyl-[cysteine desulfurase] + A + AMP + diphosphate + H(+). The protein operates within tRNA modification. Its function is as follows. Catalyzes the ATP-dependent 2-thiolation of cytidine in position 32 of tRNA, to form 2-thiocytidine (s(2)C32). The sulfur atoms are provided by the cysteine/cysteine desulfurase (IscS) system. This chain is tRNA-cytidine(32) 2-sulfurtransferase, found in Yersinia pseudotuberculosis serotype O:1b (strain IP 31758).